The sequence spans 206 residues: Hypoxanthine-guanine phosphoribosyltransferase (206 aa).

GMP is bound by residues 110–118 (DEVDDTRTT), K154, and 181–187 (WIMYPWE). D114 (proton acceptor) is an active-site residue.

It belongs to the purine/pyrimidine phosphoribosyltransferase family. As to quaternary structure, dimer. Mg(2+) is required as a cofactor.

Its subcellular location is the endoplasmic reticulum. The catalysed reaction is IMP + diphosphate = hypoxanthine + 5-phospho-alpha-D-ribose 1-diphosphate. The enzyme catalyses GMP + diphosphate = guanine + 5-phospho-alpha-D-ribose 1-diphosphate. Functionally, converts guanine to guanosine monophosphate, and hypoxanthine to inosine monophosphate. Transfers the 5-phosphoribosyl group from 5-phosphoribosylpyrophosphate onto the purine. Plays a central role in the generation of purine nucleotides through the purine salvage pathway. The sequence is that of Hypoxanthine-guanine phosphoribosyltransferase (hpt1) from Schizosaccharomyces pombe (strain 972 / ATCC 24843) (Fission yeast).